A 124-amino-acid polypeptide reads, in one-letter code: Large ribosomal subunit protein bL12 (124 aa).

It belongs to the bacterial ribosomal protein bL12 family. As to quaternary structure, homodimer. Part of the ribosomal stalk of the 50S ribosomal subunit. Forms a multimeric L10(L12)X complex, where L10 forms an elongated spine to which 2 to 4 L12 dimers bind in a sequential fashion. Binds GTP-bound translation factors.

In terms of biological role, forms part of the ribosomal stalk which helps the ribosome interact with GTP-bound translation factors. Is thus essential for accurate translation. This chain is Large ribosomal subunit protein bL12, found in Ralstonia nicotianae (strain ATCC BAA-1114 / GMI1000) (Ralstonia solanacearum).